Here is a 117-residue protein sequence, read N- to C-terminus: Fluoride-specific ion channel FluC 2 (117 aa).

2 helical membrane passes run M1 to I21 and F46 to V66. 2 residues coordinate Na(+): G71 and T74. The helical transmembrane segment at L95–Y115 threads the bilayer.

It belongs to the fluoride channel Fluc/FEX (TC 1.A.43) family.

Its subcellular location is the cell membrane. The catalysed reaction is fluoride(in) = fluoride(out). Na(+) is not transported, but it plays an essential structural role and its presence is essential for fluoride channel function. Its function is as follows. Fluoride-specific ion channel. Important for reducing fluoride concentration in the cell, thus reducing its toxicity. This is Fluoride-specific ion channel FluC 2 from Staphylococcus aureus (strain Mu50 / ATCC 700699).